A 324-amino-acid polypeptide reads, in one-letter code: 4-hydroxybenzoyl-CoA reductase subunit beta (324 aa).

The FAD-binding PCMH-type domain occupies 2–217 (NILTDFRTHR…AAIEVPPTGA (216 aa)). Residues 29–36 (PLGAGTDL), T111, N115, and Q118 contribute to the FAD site. [4Fe-4S] cluster contacts are provided by C122, C138, C146, and C155. FAD contacts are provided by D162 and K224.

Heterohexamer of two alpha, two beta and two gamma subunits. It depends on FAD as a cofactor. [4Fe-4S] cluster is required as a cofactor.

It catalyses the reaction oxidized 2[4Fe-4S]-[ferredoxin] + benzoyl-CoA + H2O = 4-hydroxybenzoyl-CoA + reduced 2[4Fe-4S]-[ferredoxin] + 2 H(+). Its activity is regulated as follows. Inactivated by low concentrations of cyanide in vitro. Functionally, component of a complex that catalyzes the reductive dehydroxylation of 4-hydroxybenzoyl-CoA to benzoyl-CoA. Reaction is not reversible. Is a key enzyme in the anaerobic degradation of phenolic compounds. The chain is 4-hydroxybenzoyl-CoA reductase subunit beta (hcrB) from Thauera aromatica.